Consider the following 113-residue polypeptide: Nucleoid-associated protein Athe_1143 (113 aa).

The protein belongs to the YbaB/EbfC family. As to quaternary structure, homodimer.

Its subcellular location is the cytoplasm. It is found in the nucleoid. Binds to DNA and alters its conformation. May be involved in regulation of gene expression, nucleoid organization and DNA protection. This is Nucleoid-associated protein Athe_1143 from Caldicellulosiruptor bescii (strain ATCC BAA-1888 / DSM 6725 / KCTC 15123 / Z-1320) (Anaerocellum thermophilum).